The chain runs to 330 residues: Taste receptor type 2 member 136 (330 aa).

The Extracellular portion of the chain corresponds to 1–32 (MKSQPVTQELHFIFPLFKTISSDIMSFLVSIA). Residues 33–53 (GIAMLAQIVLGTFANVFIVLV) traverse the membrane as a helical segment. Topologically, residues 54-73 (TCTDCIRRRKLFLADGILTS) are cytoplasmic. A helical transmembrane segment spans residues 74–94 (LAFCRIGMLWVILISWCSIVF). Topologically, residues 95–122 (HQALSLQVRFSICVGWAVTNHFNMWLAT) are extracellular. The helical transmembrane segment at 123-143 (ILSILYLLKIGNFSNLIFLGL) threads the bilayer. Over 144–149 (KRKIKS) the chain is Cytoplasmic. Residues 150–170 (VFIVVLLASLVLLFPNLITVT) form a helical membrane-spanning segment. At 171-201 (VCETVQANGYRGNLTGKTKRTYFMNLTAMIS) the chain is on the extracellular side. Asn183 and Asn195 each carry an N-linked (GlcNAc...) asparagine glycan. Residues 202–222 (FTLDNIISFTISMVCFLLLIY) form a helical membrane-spanning segment. Over 223–248 (SLCKHLRTMRLYGKGPHNPSASAHIK) the chain is Cytoplasmic. The chain crosses the membrane as a helical span at residues 249–269 (ALQAVISFLLLFSMFILSLII). Over 270–283 (SGYNYMKPLNEPVH) the chain is Extracellular. The chain crosses the membrane as a helical span at residues 284 to 304 (LICQLIGTLYPSSHSYVLLWG). At 305–330 (NRRIKLAFVLAMVQVRARLWLKEEKP) the chain is on the cytoplasmic side.

This sequence belongs to the G-protein coupled receptor T2R family.

It localises to the membrane. In terms of biological role, putative taste receptor which may play a role in the perception of bitterness. The sequence is that of Taste receptor type 2 member 136 from Rattus norvegicus (Rat).